A 141-amino-acid chain; its full sequence is Ribosome maturation factor RimP (141 aa).

The protein belongs to the RimP family.

Its subcellular location is the cytoplasm. Functionally, required for maturation of 30S ribosomal subunits. The protein is Ribosome maturation factor RimP of Laribacter hongkongensis (strain HLHK9).